Here is a 469-residue protein sequence, read N- to C-terminus: Glutamine synthetase (469 aa).

The region spanning 16 to 100 (EGVQYVDLRF…MICDIYDPVT (85 aa)) is the GS beta-grasp domain. The region spanning 108-469 (TRYIAQKAEQ…PKEFELYWDI (362 aa)) is the GS catalytic domain. The Mg(2+) site is built by glutamate 133 and glutamate 135. An ATP-binding site is contributed by glutamate 207. Positions 212 and 220 each coordinate Mg(2+). L-glutamate is bound by residues 264-265 (NG) and glycine 265. Mg(2+) is bound at residue histidine 269. Residues 271 to 273 (HFS) and serine 273 each bind ATP. L-glutamate-binding residues include arginine 321, glutamate 327, and arginine 339. Residues arginine 339, arginine 344, and lysine 353 each coordinate ATP. Position 358 (glutamate 358) interacts with Mg(2+). Arginine 360 is a binding site for L-glutamate. O-AMP-tyrosine is present on tyrosine 398.

This sequence belongs to the glutamine synthetase family. Oligomer of 12 subunits arranged in the form of two hexagons. Mg(2+) is required as a cofactor.

It is found in the cytoplasm. The enzyme catalyses L-glutamate + NH4(+) + ATP = L-glutamine + ADP + phosphate + H(+). With respect to regulation, the activity of this enzyme could be controlled by adenylation under conditions of abundant glutamine. In terms of biological role, catalyzes the ATP-dependent biosynthesis of glutamine from glutamate and ammonia. This Aquifex aeolicus (strain VF5) protein is Glutamine synthetase.